We begin with the raw amino-acid sequence, 78 residues long: Large ribosomal subunit protein bL28 (78 aa).

The protein belongs to the bacterial ribosomal protein bL28 family.

In Trichodesmium erythraeum (strain IMS101), this protein is Large ribosomal subunit protein bL28.